We begin with the raw amino-acid sequence, 201 residues long: Recombination protein RecR (201 aa).

The C4-type zinc finger occupies 60–75; the sequence is CSRCGNVDTVDPCIVC. Positions 83–178 constitute a Toprim domain; sequence SVIIVVEDVS…KITRLAHGVP (96 aa).

This sequence belongs to the RecR family.

Functionally, may play a role in DNA repair. It seems to be involved in an RecBC-independent recombinational process of DNA repair. It may act with RecF and RecO. The protein is Recombination protein RecR of Rhizobium johnstonii (strain DSM 114642 / LMG 32736 / 3841) (Rhizobium leguminosarum bv. viciae).